Here is a 968-residue protein sequence, read N- to C-terminus: Serine/threonine-protein kinase apg-1 (968 aa).

The Protein kinase domain maps to 24–329; it reads FVIDQEIGKG…FEDLFNHPVV (306 aa). ATP is bound by residues 30–38 and Lys53; that span reads IGKGSFAKV. The active-site Proton acceptor is the Asp167. Disordered stretches follow at residues 334–500, 528–585, 884–906, and 939–968; these read PGLV…ERAA, MYPQ…LGTS, LPKR…LSDE, and ASKA…SVPA. Basic and acidic residues-rich tracts occupy residues 350–361, 371–380, and 417–431; these read LKEERPVSRAED, LRKDLADREG, and PRED…KEAA. Composition is skewed to polar residues over residues 441 to 452, 528 to 538, and 545 to 557; these read VQPSTSAPTRPS, MYPQQPQSPKS, and ATQQ…TSGA.

Belongs to the protein kinase superfamily. Ser/Thr protein kinase family. APG1/unc-51/ULK1 subfamily. In terms of assembly, homodimer. Forms a ternary complex with ATG13 and ATG17.

Its subcellular location is the cytoplasm. The protein localises to the preautophagosomal structure membrane. It catalyses the reaction L-seryl-[protein] + ATP = O-phospho-L-seryl-[protein] + ADP + H(+). The enzyme catalyses L-threonyl-[protein] + ATP = O-phospho-L-threonyl-[protein] + ADP + H(+). In terms of biological role, serine/threonine protein kinase involved in the cytoplasm to vacuole transport (Cvt) and found to be essential in autophagy, where it is required for the formation of autophagosomes. Involved in the clearance of protein aggregates which cannot be efficiently cleared by the proteasome. Required for selective autophagic degradation of the nucleus (nucleophagy) as well as for mitophagy which contributes to regulate mitochondrial quantity and quality by eliminating the mitochondria to a basal level to fulfill cellular energy requirements and preventing excess ROS production. Also involved in endoplasmic reticulum-specific autophagic process, in selective removal of ER-associated degradation (ERAD) substrates. Plays a key role in ATG9 and ATG23 cycling through the pre-autophagosomal structure and is necessary to promote ATG18 binding to ATG9 through phosphorylation of ATG9. Catalyzes phosphorylation of ATG4, decreasing the interaction between ATG4 and ATG8 and impairing deconjugation of PE-conjugated forms of ATG8. This is Serine/threonine-protein kinase apg-1 from Neurospora crassa (strain ATCC 24698 / 74-OR23-1A / CBS 708.71 / DSM 1257 / FGSC 987).